A 290-amino-acid polypeptide reads, in one-letter code: uncharacterized protein (290 aa).

2 disordered regions span residues 1-98 and 209-236; these read MLGQ…SRRV and LSGQRGAGPGNSAYTPRRSQGGPRAATT. Positions 63–76 are enriched in basic and acidic residues; the sequence is KPDRVRPGQRDRIG. Low complexity predominate over residues 87–97; sequence AGQARAASSRR. Residues 261 to 281 form a helical membrane-spanning segment; it reads CILTALLAVSFHSIGVVIMTS.

The protein resides in the membrane. This is an uncharacterized protein from Homo sapiens (Human).